The primary structure comprises 471 residues: Proline and serine-rich protein 2 (471 aa).

Disordered stretches follow at residues 1–46 (MPGN…SFTM) and 82–247 (CDSG…GDHV). Low complexity predominate over residues 26–43 (LSRGGSLESRCSSSRSRS). Ser43 is subject to Phosphoserine. Position 45 is a phosphothreonine (Thr45). Positions 90–101 (SPQSLEESPSSH) are enriched in low complexity. Residues 154-177 (LPPPDSRGPEVFPLPPSLPVPAPS) are compositionally biased toward pro residues. Residues Ser187, Ser220, and Ser223 each carry the phosphoserine modification. Arg263 carries the asymmetric dimethylarginine; alternate modification. Arg263 is subject to Omega-N-methylarginine; alternate. Disordered regions lie at residues 310-365 (DTSS…TEQP) and 383-437 (PSSF…RAVG). Residues 313–324 (SEERWQKAEEQR) show a composition bias toward basic and acidic residues. Polar residues-rich tracts occupy residues 354–364 (AQQSRAVQTEQ) and 383–393 (PSSFVPTSKTI). Over residues 415–427 (YEPRPDGSQDARK) the composition is skewed to basic and acidic residues. Ser431 bears the Phosphoserine mark. Arg450 bears the Omega-N-methylarginine mark.

The polypeptide is Proline and serine-rich protein 2 (Proser2) (Mus musculus (Mouse)).